The primary structure comprises 285 residues: 4-diphosphocytidyl-2-C-methyl-D-erythritol kinase (285 aa).

Lysine 12 is an active-site residue. 95–105 (PMGGGVGGGSS) lines the ATP pocket. The active site involves aspartate 137.

The protein belongs to the GHMP kinase family. IspE subfamily.

The catalysed reaction is 4-CDP-2-C-methyl-D-erythritol + ATP = 4-CDP-2-C-methyl-D-erythritol 2-phosphate + ADP + H(+). Its pathway is isoprenoid biosynthesis; isopentenyl diphosphate biosynthesis via DXP pathway; isopentenyl diphosphate from 1-deoxy-D-xylulose 5-phosphate: step 3/6. In terms of biological role, catalyzes the phosphorylation of the position 2 hydroxy group of 4-diphosphocytidyl-2C-methyl-D-erythritol. The chain is 4-diphosphocytidyl-2-C-methyl-D-erythritol kinase from Actinobacillus pleuropneumoniae serotype 3 (strain JL03).